Reading from the N-terminus, the 481-residue chain is UDP-N-acetylmuramate--L-alanine ligase (481 aa).

Position 115–121 (115–121 (GTHGKTT)) interacts with ATP.

This sequence belongs to the MurCDEF family.

It localises to the cytoplasm. It carries out the reaction UDP-N-acetyl-alpha-D-muramate + L-alanine + ATP = UDP-N-acetyl-alpha-D-muramoyl-L-alanine + ADP + phosphate + H(+). Its pathway is cell wall biogenesis; peptidoglycan biosynthesis. Its function is as follows. Cell wall formation. The chain is UDP-N-acetylmuramate--L-alanine ligase from Rhodospirillum rubrum (strain ATCC 11170 / ATH 1.1.1 / DSM 467 / LMG 4362 / NCIMB 8255 / S1).